The following is a 299-amino-acid chain: Putative cuticle collagen 155 (299 aa).

An N-terminal signal peptide occupies residues 1–27; sequence MEFEQRIKAYRFVAYSAVAFSVVAVLS. 4 triple-helical region regions span residues 103-132, 151-177, 181-202, and 216-278; these read GAAG…PGHP, GPPG…PGQD, GAPG…GAPG, and GAPG…VGEK. Residues 107-278 form a disordered region; the sequence is PAGTPGKPGR…SGTPGGVGEK (172 aa). Over residues 129–161 the composition is skewed to pro residues; that stretch reads PGHPPQQPCDPITPPPCQPCPQGPPGPPGPPGP. Positions 163-172 are enriched in gly residues; sequence GDAGGNGNPG. A compositionally biased stretch (low complexity) spans 173–197; that stretch reads SPGQDGQPGAPGNKGPSGPNGNPGA. The span at 215 to 233 shows a compositional bias: pro residues; it reads PGAPGPQGTPGPQGPPGQP. The span at 250–268 shows a compositional bias: low complexity; that stretch reads PNGNPGQPGADGNPGAPGQ.

This sequence belongs to the cuticular collagen family. Collagen polypeptide chains are complexed within the cuticle by disulfide bonds and other types of covalent cross-links.

Its function is as follows. Nematode cuticles are composed largely of collagen-like proteins. The cuticle functions both as an exoskeleton and as a barrier to protect the worm from its environment. This is Putative cuticle collagen 155 (col-155) from Caenorhabditis elegans.